The following is a 268-amino-acid chain: Bis(5'-nucleosyl)-tetraphosphatase, symmetrical (268 aa).

This sequence belongs to the Ap4A hydrolase family.

It catalyses the reaction P(1),P(4)-bis(5'-adenosyl) tetraphosphate + H2O = 2 ADP + 2 H(+). In terms of biological role, hydrolyzes diadenosine 5',5'''-P1,P4-tetraphosphate to yield ADP. The polypeptide is Bis(5'-nucleosyl)-tetraphosphatase, symmetrical (Vibrio parahaemolyticus serotype O3:K6 (strain RIMD 2210633)).